A 283-amino-acid polypeptide reads, in one-letter code: Shikimate dehydrogenase (NADP(+)) (283 aa).

Shikimate-binding positions include Ser-18–Ser-20 and Thr-66. Catalysis depends on Lys-70, which acts as the Proton acceptor. Shikimate contacts are provided by Asn-91 and Asp-106. NADP(+) contacts are provided by residues Gly-130–Ala-134 and Met-225. Shikimate is bound at residue Tyr-227. Gly-248 contacts NADP(+).

It belongs to the shikimate dehydrogenase family. Homodimer.

It catalyses the reaction shikimate + NADP(+) = 3-dehydroshikimate + NADPH + H(+). The protein operates within metabolic intermediate biosynthesis; chorismate biosynthesis; chorismate from D-erythrose 4-phosphate and phosphoenolpyruvate: step 4/7. Involved in the biosynthesis of the chorismate, which leads to the biosynthesis of aromatic amino acids. Catalyzes the reversible NADPH linked reduction of 3-dehydroshikimate (DHSA) to yield shikimate (SA). The polypeptide is Shikimate dehydrogenase (NADP(+)) (Pelodictyon phaeoclathratiforme (strain DSM 5477 / BU-1)).